The following is a 406-amino-acid chain: Pyruvate dehydrogenase E1 component subunit beta-2, chloroplastic (406 aa).

Residues Met-1 to Val-44 constitute a chloroplast transit peptide. Glu-142 contributes to the thiamine diphosphate binding site. K(+) is bound by residues Val-195, Ala-243, Ile-244, and Asn-248.

As to quaternary structure, tetramer of 2 alpha and 2 beta subunits. It depends on thiamine diphosphate as a cofactor.

The protein resides in the plastid. It localises to the chloroplast. The catalysed reaction is N(6)-[(R)-lipoyl]-L-lysyl-[protein] + pyruvate + H(+) = N(6)-[(R)-S(8)-acetyldihydrolipoyl]-L-lysyl-[protein] + CO2. In terms of biological role, the pyruvate dehydrogenase complex catalyzes the overall conversion of pyruvate to acetyl-CoA and CO(2). It contains multiple copies of three enzymatic components: pyruvate dehydrogenase (E1), dihydrolipoamide acetyltransferase (E2) and lipoamide dehydrogenase (E3). The sequence is that of Pyruvate dehydrogenase E1 component subunit beta-2, chloroplastic (PDH-E1 BETA) from Arabidopsis thaliana (Mouse-ear cress).